A 663-amino-acid polypeptide reads, in one-letter code: Ankyrin repeat and SAM domain-containing protein 3 (663 aa).

The interaction with NEK7 stretch occupies residues 1-421 (MSELSDEASE…PGSEPQAEKS (421 aa)). Phosphoserine is present on residues Ser-2 and Ser-5. ANK repeat units follow at residues 34–64 (DVPL…DLNK), 68–97 (GGWT…SVNV), 101–130 (EGQT…ELEM), 134–163 (QGWT…NANV), 168–197 (YGFT…KVDT), and 201–220 (SGAT…IVAL). At Asn-96 the chain carries 3-hydroxyasparagine. Ser-201, Ser-225, Ser-243, Ser-244, and Ser-245 each carry phosphoserine. Disordered regions lie at residues 242–261 (LSSS…CRKK) and 278–425 (TGLG…PYSG). Thr-318 is subject to Phosphothreonine. Ser-319 is modified (phosphoserine). Over residues 322–337 (NERDVESSSSSSREEP) the composition is skewed to basic and acidic residues. Phosphoserine occurs at positions 366, 369, and 373. Residues 378 to 395 (KSSVRKQTRTYLKNKSRH) show a composition bias toward basic residues. Positions 424-487 (SGPQDLATLL…TSAIARWHSS (64 aa)) constitute an SAM domain. The stretch at 500–575 (ADRLEAEMQE…AALVLDQLRA (76 aa)) forms a coiled coil. At Ser-540 the chain carries Phosphoserine. Disordered regions lie at residues 585–604 (KQHH…PADS) and 637–663 (AEPG…SDVG). Positions 641 to 651 (ETTDAEWEEME) are enriched in acidic residues. The span at 654–663 (IARRDDSDVG) shows a compositional bias: basic and acidic residues.

Homooligomer. Interacts (via SAM domain) with ANKS6 (via SAM domain). Interacts with BICC1. Interacts with NPHP1. Interacts with NEK8. Interacts with HIF1AN. Interacts with NEK7; this interaction alters the subcellular distribution of NEK7 by preventing its nuclear translocation. Post-translationally, hydroxylated at Asn-96, most probably by HIF1AN. In terms of processing, phosphorylations at Ser-5, Ser-225, Thr-318, Ser-319, Ser-366 and Ser-369 occur in a NEK7-dependent manner. Polyubiquitinated.

It is found in the cell projection. The protein localises to the cilium. Its subcellular location is the cytoplasm. Its function is as follows. May be involved in vasopressin signaling in the kidney. The protein is Ankyrin repeat and SAM domain-containing protein 3 (Anks3) of Rattus norvegicus (Rat).